Reading from the N-terminus, the 125-residue chain is Oxytocin-neurophysin 1 (125 aa).

The first 19 residues, 1-19, serve as a signal peptide directing secretion; the sequence is MAGPSLACCLLGLLALTSA. An intrachain disulfide couples cysteine 20 to cysteine 25. A Glycine amide modification is found at glycine 28. Intrachain disulfides connect cysteine 41-cysteine 85, cysteine 44-cysteine 58, cysteine 52-cysteine 75, cysteine 59-cysteine 65, cysteine 92-cysteine 104, cysteine 98-cysteine 116, and cysteine 105-cysteine 110.

This sequence belongs to the vasopressin/oxytocin family. As to quaternary structure, interacts with oxytocin receptor (Ki=1.5 nM). Interacts with vasopressin V1aR/AVPR1A (Ki=37 nM), V1bR/AVPR1B (Ki=222 nM) and V2R/AVPR2 receptors (Ki=823 nM).

The protein localises to the secreted. Functionally, neurophysin 1 specifically binds oxytocin. In terms of biological role, oxytocin causes contraction of the smooth muscle of the uterus and of the mammary gland. Acts by binding to oxytocin receptor (OXTR). This is Oxytocin-neurophysin 1 (OXT) from Homo sapiens (Human).